A 106-amino-acid polypeptide reads, in one-letter code: Protein S40-3 (106 aa).

Positions 1 to 65 are disordered; sequence MSEEFQESEV…TEEEGEMTPP (65 aa). Over residues 16-41 the composition is skewed to basic and acidic residues; sequence SFTRKDNKISHNNENYERKSTEKDKI.

Belongs to the senescence regulator S40 family.

Its subcellular location is the nucleus. Functionally, regulates senescence either by modulating WRKY53 or by activating SAG12. Affects the natural variation of cyst nematodes sex ratio and susceptibility to parasitic nematodes, depending on single nucleotide polymorphism (SNPs) between cultivars. The chain is Protein S40-3 from Arabidopsis thaliana (Mouse-ear cress).